The following is a 339-amino-acid chain: Coproporphyrin III ferrochelatase (339 aa).

Positions 52 and 121 each coordinate Fe-coproporphyrin III. Fe(2+) is bound by residues His181 and Glu264.

Belongs to the ferrochelatase family.

The protein localises to the cytoplasm. It carries out the reaction Fe-coproporphyrin III + 2 H(+) = coproporphyrin III + Fe(2+). It functions in the pathway porphyrin-containing compound metabolism; protoheme biosynthesis. In terms of biological role, involved in coproporphyrin-dependent heme b biosynthesis. Catalyzes the insertion of ferrous iron into coproporphyrin III to form Fe-coproporphyrin III. This chain is Coproporphyrin III ferrochelatase, found in Mycolicibacterium vanbaalenii (strain DSM 7251 / JCM 13017 / BCRC 16820 / KCTC 9966 / NRRL B-24157 / PYR-1) (Mycobacterium vanbaalenii).